A 474-amino-acid chain; its full sequence is Transmembrane transporter FVEG_12640 (474 aa).

Over residues 1–15 the composition is skewed to polar residues; it reads MASPTISSMEQYTPS. Residues 1-39 are disordered; the sequence is MASPTISSMEQYTPSSKDEKIVPLHGDAAGSDTEKGESR. The next 10 membrane-spanning stretches (helical) occupy residues 72–92, 133–153, 164–184, 192–212, 231–251, 275–295, 317–337, 364–384, 387–407, and 431–451; these read ILAIPGALGALGSVGGSLCIV, LVGVQIIVAQVLISAGGIVTS, GTCTVMFALVSAILITLFSSI, WLTWFGFITFVLGVFIFVVAV, WAPIAYPSFVVGMINATNIFI, ACLVAGFIVGAMYLSFSLVIY, VAYGVSLPGLILGVGIYQHVA, LGINLALGTAAFIVAEAVPIL, LLGLAGSLCFAPFSLVFPALL, and LIMILGFYMIVAGTYSVAVLI.

Belongs to the amino acid/polyamine transporter 2 family.

Its subcellular location is the membrane. In terms of biological role, transmembrane transporter; part of the Fusarium detoxification of benzoxazolinone cluster 2 (FDB2) involved in the degradation of benzoxazolinones produced by the host plant. Maize, wheat, and rye produce the 2 benzoxazinone phytoanticipins 2,4-dihy-droxy-7-methoxy-1,4-benzoxazin-3-one (DIMBOA) and 2,4-dihydroxy-1,4-benzoxazin-3-one (DIBOA) that, due to their inherent instability once released, spontaneously degrade to the more stable corresponding benzoxazolinones, 6-methoxy-2-benzoxazolinone (MBOA) and 2-benzoxazolinone (BOA), respectively. Might be involved in the transport of metabolites of benzoxazolinone degradation. This Gibberella moniliformis (strain M3125 / FGSC 7600) (Maize ear and stalk rot fungus) protein is Transmembrane transporter FVEG_12640.